Consider the following 144-residue polypeptide: Large ribosomal subunit protein uL16 (144 aa).

The protein belongs to the universal ribosomal protein uL16 family. In terms of assembly, part of the 50S ribosomal subunit.

Binds 23S rRNA and is also seen to make contacts with the A and possibly P site tRNAs. This is Large ribosomal subunit protein uL16 from Bacillus subtilis (strain 168).